The primary structure comprises 521 residues: NAD(P)H-quinone oxidoreductase subunit 2 (521 aa).

Transmembrane regions (helical) follow at residues 16-36 (ILPE…DLIG), 40-60 (VALA…GLLV), 80-100 (LSII…LMSV), 110-130 (LAEF…LSAA), 133-153 (LVMV…MTGY), 168-188 (LLIG…LYGL), 212-232 (LGLA…ISAV), 246-266 (PTPV…AVAI), 280-300 (WHVI…VVAL), 308-328 (MLAY…VAGS), 336-356 (VFYM…IILF), 380-400 (LGLS…GFFG), 402-422 (IYIF…LGLV), and 468-488 (VGIV…NPLF).

This sequence belongs to the complex I subunit 2 family. NDH-1 can be composed of about 15 different subunits; different subcomplexes with different compositions have been identified which probably have different functions.

The protein resides in the cellular thylakoid membrane. It catalyses the reaction a plastoquinone + NADH + (n+1) H(+)(in) = a plastoquinol + NAD(+) + n H(+)(out). It carries out the reaction a plastoquinone + NADPH + (n+1) H(+)(in) = a plastoquinol + NADP(+) + n H(+)(out). In terms of biological role, NDH-1 shuttles electrons from an unknown electron donor, via FMN and iron-sulfur (Fe-S) centers, to quinones in the respiratory and/or the photosynthetic chain. The immediate electron acceptor for the enzyme in this species is believed to be plastoquinone. Couples the redox reaction to proton translocation, and thus conserves the redox energy in a proton gradient. Cyanobacterial NDH-1 also plays a role in inorganic carbon-concentration. This is NAD(P)H-quinone oxidoreductase subunit 2 from Synechocystis sp. (strain ATCC 27184 / PCC 6803 / Kazusa).